Reading from the N-terminus, the 134-residue chain is Lymphocyte antigen 6F (134 aa).

Positions 1–26 are cleaved as a signal peptide; sequence MDSCHTTKSCVLILLVVLLCAERAQG. The UPAR/Ly6 domain maps to 27–119; the sequence is LECYNCLGVS…TGGSTWTMTR (93 aa). 5 disulfides stabilise this stretch: Cys29–Cys53, Cys32–Cys41, Cys46–Cys74, Cys78–Cys98, and Cys99–Cys104. The GPI-anchor amidated glycine moiety is linked to residue Gly112. The propeptide at 113–134 is removed in mature form; it reads STWTMTRVLLLNLGSVFLQTLL.

The protein resides in the cell membrane. This Mus musculus (Mouse) protein is Lymphocyte antigen 6F (Ly6f).